Here is a 475-residue protein sequence, read N- to C-terminus: Aspartyl/glutamyl-tRNA(Asn/Gln) amidotransferase subunit B (475 aa).

Belongs to the GatB/GatE family. GatB subfamily. As to quaternary structure, heterotrimer of A, B and C subunits.

It catalyses the reaction L-glutamyl-tRNA(Gln) + L-glutamine + ATP + H2O = L-glutaminyl-tRNA(Gln) + L-glutamate + ADP + phosphate + H(+). The catalysed reaction is L-aspartyl-tRNA(Asn) + L-glutamine + ATP + H2O = L-asparaginyl-tRNA(Asn) + L-glutamate + ADP + phosphate + 2 H(+). Functionally, allows the formation of correctly charged Asn-tRNA(Asn) or Gln-tRNA(Gln) through the transamidation of misacylated Asp-tRNA(Asn) or Glu-tRNA(Gln) in organisms which lack either or both of asparaginyl-tRNA or glutaminyl-tRNA synthetases. The reaction takes place in the presence of glutamine and ATP through an activated phospho-Asp-tRNA(Asn) or phospho-Glu-tRNA(Gln). The protein is Aspartyl/glutamyl-tRNA(Asn/Gln) amidotransferase subunit B of Staphylococcus saprophyticus subsp. saprophyticus (strain ATCC 15305 / DSM 20229 / NCIMB 8711 / NCTC 7292 / S-41).